Here is a 625-residue protein sequence, read N- to C-terminus: tRNA uridine 5-carboxymethylaminomethyl modification enzyme MnmG (625 aa).

FAD is bound at residue 11–16; it reads GAGHAG. An NAD(+)-binding site is contributed by 271–285; that stretch reads GPRYCPSIETKIVTF.

The protein belongs to the MnmG family. In terms of assembly, homodimer. Heterotetramer of two MnmE and two MnmG subunits. FAD serves as cofactor.

It localises to the cytoplasm. Its function is as follows. NAD-binding protein involved in the addition of a carboxymethylaminomethyl (cmnm) group at the wobble position (U34) of certain tRNAs, forming tRNA-cmnm(5)s(2)U34. In Parabacteroides distasonis (strain ATCC 8503 / DSM 20701 / CIP 104284 / JCM 5825 / NCTC 11152), this protein is tRNA uridine 5-carboxymethylaminomethyl modification enzyme MnmG.